The primary structure comprises 411 residues: Inhibin beta B chain (411 aa).

The first 28 residues, 1–28 (MDGLPGRALGAACLLLLAAGWLGPEAWG), serve as a signal peptide directing secretion. A disordered region spans residues 27-69 (WGSPTPPPSPAAPPPPPPPGAPGGSQDTCTSCGGGGGGFRRPE). The propeptide occupies 29-296 (SPTPPPSPAA…GDSRHRIRKR (268 aa)). Positions 30–47 (PTPPPSPAAPPPPPPPGA) are enriched in pro residues. The N-linked (GlcNAc...) asparagine glycan is linked to asparagine 97. Disulfide bonds link cysteine 300–cysteine 308, cysteine 307–cysteine 376, cysteine 336–cysteine 408, and cysteine 340–cysteine 410.

It belongs to the TGF-beta family. Dimeric, linked by one or more disulfide bonds. Inhibin B is a dimer of alpha and beta-B. Activin B is a homodimer of beta-B. Activin AB is a dimer of beta-A and beta-B. Interacts with FST and FSTL3. In terms of tissue distribution, alpha- and beta-B subunits are the predominant forms found in rat testis. Also expressed in ovary.

The protein localises to the secreted. In terms of biological role, inhibins and activins inhibit and activate, respectively, the secretion of follitropin by the pituitary gland. Inhibins/activins are involved in regulating a number of diverse functions such as hypothalamic and pituitary hormone secretion, gonadal hormone secretion, germ cell development and maturation, erythroid differentiation, insulin secretion, nerve cell survival, embryonic axial development or bone growth, depending on their subunit composition. Inhibins appear to oppose the functions of activins. Activin B is a dimer of alpha and beta-B that plays a role in several essential biological processes including embryonic development, stem cell maintenance and differentiation, haematopoiesis, cell proliferation and wound healing. Signals through type I receptor ACVR1C, abundantly expressed in pancreatic beta cells, and type II receptors like ACVR2A. Upon ligand binding, these receptors phosphorylate intracellular signaling mediators SMAD2 and SMAD3, which form a complex with SMAD4, translocate to the nucleus, and regulate gene expression. Plays a crucial role in the induction of hepcidin by inflammation through activation of ACVR1C and subsequent phosphorylation of SMAD1/5/8. Regulates adipocyte lipid metabolism by decreasing non-esterified fatty acids and glycerol release and increases intracellular triglyceride content. Stimulates wound healing by promoting cell migration and hair follicle regeneration through the JNK and ERK signaling pathways downstream of RHOA. Its function is as follows. Inhibin B is a dimer of alpha and beta-B that plays a crucial role in the regulation of the reproductive system by inhibiting the secretion of follicle-stimulating hormone (FSH) from the anterior pituitary gland. Thereby, maintains reproductive homeostasis in both males and females. Acts as a more potent suppressor of FSH release than inhibin A. Functions as competitive receptor antagonist binding activin type II receptors with high affinity in the presence of the TGF-beta type III coreceptor/TGFBR3L. The protein is Inhibin beta B chain (Inhbb) of Rattus norvegicus (Rat).